The primary structure comprises 1896 residues: Plexin-A1 (1896 aa).

The first 26 residues, 1–26 (MPLPPRSLQVLLLLLLLLLLLPGMWA), serve as a signal peptide directing secretion. The Sema domain occupies 27 to 512 (EAGLPRAGGG…TEKQVTRVPV (486 aa)). Over 27 to 1244 (EAGLPRAGGG…VYSDSLLTLP (1218 aa)) the chain is Extracellular. Asn-77 carries N-linked (GlcNAc...) asparagine glycosylation. Disulfide bonds link Cys-95–Cys-104, Cys-130–Cys-138, Cys-286–Cys-407, Cys-302–Cys-358, Cys-376–Cys-395, Cys-515–Cys-532, Cys-521–Cys-563, Cys-524–Cys-541, Cys-535–Cys-547, and Cys-598–Cys-617. Residues Asn-660, Asn-672, and Asn-701 are each glycosylated (N-linked (GlcNAc...) asparagine). 4 consecutive IPT/TIG domains span residues 864–959 (PKIL…FTFV), 961–1045 (PTFY…YNYT), 1048–1147 (PTIL…FLYY), and 1150–1236 (PVLE…LQVY). Asn-1043 carries an N-linked (GlcNAc...) asparagine glycan. Asn-1187 and Asn-1212 each carry an N-linked (GlcNAc...) asparagine glycan. Residues 1245 to 1265 (AIVGIGGGGGLLLLVIVAVLI) form a helical membrane-spanning segment. Residues 1264–1317 (LIAYKRKSRDADRTLKRLQLQMDNLESRVALECKEAFAELQTDIHELTNDLDGA) are a coiled coil. Over 1266–1896 (AYKRKSRDAD…QVVDTMALSS (631 aa)) the chain is Cytoplasmic.

Belongs to the plexin family. As to quaternary structure, interacts directly with NRP1 and NRP2. Interacts with PLXN1B. Interacts with FARP2, RND1 and KDR/VEGFR2. Binding of SEMA3A leads to dissociation of FARP2. Interacts with CRMP1, DPYSL2/CRMP2, DPYSL3/CRMP3 and DPYSL4/CRMP4. Interacts (via TIG domains) with TREM2; the interaction mediates SEMA6D binding and signaling through TYROBP. Detected in fetal brain, lung, liver and kidney.

It localises to the cell membrane. Functionally, coreceptor for SEMA3A, SEMA3C, SEMA3F and SEMA6D. Necessary for signaling by class 3 semaphorins and subsequent remodeling of the cytoskeleton. Plays a role in axon guidance, invasive growth and cell migration. Class 3 semaphorins bind to a complex composed of a neuropilin and a plexin. The plexin modulates the affinity of the complex for specific semaphorins, and its cytoplasmic domain is required for the activation of down-stream signaling events in the cytoplasm. Acts as coreceptor of TREM2 for SEMA6D in dendritic cells and is involved in the generation of immune responses and skeletal homeostasis. The sequence is that of Plexin-A1 from Homo sapiens (Human).